The following is a 168-amino-acid chain: Endoribonuclease YbeY (168 aa).

Residues H123, H127, and H133 each contribute to the Zn(2+) site.

The protein belongs to the endoribonuclease YbeY family. The cofactor is Zn(2+).

Its subcellular location is the cytoplasm. Functionally, single strand-specific metallo-endoribonuclease involved in late-stage 70S ribosome quality control and in maturation of the 3' terminus of the 16S rRNA. This chain is Endoribonuclease YbeY, found in Francisella tularensis subsp. holarctica (strain LVS).